A 282-amino-acid chain; its full sequence is Pantothenate synthetase (282 aa).

30–37 is an ATP binding site; it reads MGALHAGH. The active-site Proton donor is the His-37. Gln-61 is a binding site for (R)-pantoate. Gln-61 contacts beta-alanine. Residue 147–150 participates in ATP binding; the sequence is GEKD. Gln-153 is a (R)-pantoate binding site. ATP-binding positions include Val-176 and 184–187; that span reads LSSR.

The protein belongs to the pantothenate synthetase family. As to quaternary structure, homodimer.

The protein localises to the cytoplasm. The enzyme catalyses (R)-pantoate + beta-alanine + ATP = (R)-pantothenate + AMP + diphosphate + H(+). It participates in cofactor biosynthesis; (R)-pantothenate biosynthesis; (R)-pantothenate from (R)-pantoate and beta-alanine: step 1/1. Catalyzes the condensation of pantoate with beta-alanine in an ATP-dependent reaction via a pantoyl-adenylate intermediate. This is Pantothenate synthetase from Bacteroides fragilis (strain YCH46).